Reading from the N-terminus, the 207-residue chain is 2,3-bisphosphoglycerate-dependent phosphoglycerate mutase (207 aa).

Substrate contacts are provided by residues Arg10 to Asn17, Thr23 to Gly24, Arg62, Glu89 to Tyr92, Lys100, Arg116 to Arg117, and Gly160 to Asn161. The Tele-phosphohistidine intermediate role is filled by His11. Catalysis depends on Glu89, which acts as the Proton donor/acceptor.

The protein belongs to the phosphoglycerate mutase family. BPG-dependent PGAM subfamily. Homodimer.

The catalysed reaction is (2R)-2-phosphoglycerate = (2R)-3-phosphoglycerate. It functions in the pathway carbohydrate degradation; glycolysis; pyruvate from D-glyceraldehyde 3-phosphate: step 3/5. Catalyzes the interconversion of 2-phosphoglycerate and 3-phosphoglycerate. The polypeptide is 2,3-bisphosphoglycerate-dependent phosphoglycerate mutase (Bradyrhizobium sp. (strain ORS 278)).